The sequence spans 1273 residues: DNA gyrase subunit A (1273 aa).

The 890-residue stretch at 42-931 (LPEVRDGLKP…VDGDVNDEDL (890 aa)) folds into the Topo IIA-type catalytic domain. Catalysis depends on Tyr-130, which acts as the O-(5'-phospho-DNA)-tyrosine intermediate. The region spanning 256-396 (LFGAFISGGF…VQQMLLEFGV (141 aa)) is the DOD-type homing endonuclease domain. Residues 958-964 (QKRGGKG) carry the GyrA-box motif.

It belongs to the type II topoisomerase GyrA/ParC subunit family. In terms of assembly, heterotetramer, composed of two GyrA and two GyrB chains. In the heterotetramer, GyrA contains the active site tyrosine that forms a transient covalent intermediate with the DNA, while GyrB binds cofactors catalyzes ATP hydrolysis. In terms of processing, this protein undergoes a protein self splicing that involves a post-translational excision of the intervening region (intein) followed by peptide ligation.

The protein localises to the cytoplasm. It catalyses the reaction ATP-dependent breakage, passage and rejoining of double-stranded DNA.. DNA supercoiling is inhibited by fluoroquinolones; IC(50) 1 ug/ml for sitafloxacin. Its function is as follows. A type II topoisomerase that negatively supercoils closed circular double-stranded (ds) DNA in an ATP-dependent manner to modulate DNA topology and maintain chromosomes in an underwound state. Negative supercoiling favors strand separation, and DNA replication, transcription, recombination and repair, all of which involve strand separation. Also able to catalyze the interconversion of other topological isomers of dsDNA rings, including catenanes and knotted rings. Type II topoisomerases break and join 2 DNA strands simultaneously in an ATP-dependent manner. The protein is DNA gyrase subunit A of Mycobacterium leprae (strain TN).